The sequence spans 201 residues: 3-isopropylmalate dehydratase small subunit (201 aa).

It belongs to the LeuD family. LeuD type 1 subfamily. In terms of assembly, heterodimer of LeuC and LeuD.

The catalysed reaction is (2R,3S)-3-isopropylmalate = (2S)-2-isopropylmalate. The protein operates within amino-acid biosynthesis; L-leucine biosynthesis; L-leucine from 3-methyl-2-oxobutanoate: step 2/4. Its function is as follows. Catalyzes the isomerization between 2-isopropylmalate and 3-isopropylmalate, via the formation of 2-isopropylmaleate. This chain is 3-isopropylmalate dehydratase small subunit, found in Shewanella pealeana (strain ATCC 700345 / ANG-SQ1).